The sequence spans 102 residues: Small ribosomal subunit protein uS10 (102 aa).

It belongs to the universal ribosomal protein uS10 family. Part of the 30S ribosomal subunit.

Functionally, involved in the binding of tRNA to the ribosomes. The chain is Small ribosomal subunit protein uS10 from Latilactobacillus sakei subsp. sakei (strain 23K) (Lactobacillus sakei subsp. sakei).